The chain runs to 398 residues: ATP-dependent RNA helicase eIF4A (398 aa).

The Q motif signature appears at 25–53 (DSFDTMNLKPELLRGVYAYGFERPSAIQQ). The Helicase ATP-binding domain maps to 56–226 (IMPVIKGHDV…TKFMRDPVRI (171 aa)). 69–76 (AQSGTGKT) provides a ligand contact to ATP. Positions 174-177 (DEAD) match the DEAD box motif. One can recognise a Helicase C-terminal domain in the interval 237-398 (GIKQFYIAVE…EMPMNVADLI (162 aa)).

The protein belongs to the DEAD box helicase family. eIF4A subfamily. Component of the eIF4F complex, which composition varies with external and internal environmental conditions. It is composed of at least eIF4A, eIF4E and eIF4G.

The protein resides in the cytoplasm. The catalysed reaction is ATP + H2O = ADP + phosphate + H(+). Functionally, ATP-dependent RNA helicase which is a subunit of the eIF4F complex involved in cap recognition and is required for mRNA binding to ribosome. In the current model of translation initiation, eIF4A unwinds RNA secondary structures in the 5'-UTR of mRNAs which is necessary to allow efficient binding of the small ribosomal subunit, and subsequent scanning for the initiator codon. The sequence is that of ATP-dependent RNA helicase eIF4A (tif1) from Botryotinia fuckeliana (strain B05.10) (Noble rot fungus).